A 161-amino-acid chain; its full sequence is Small ribosomal subunit protein uS15 (161 aa).

The segment covering 1–13 has biased composition (basic residues); the sequence is MAGKRRKKGRSHS. Residues 1–22 form a disordered region; that stretch reads MAGKRRKKGRSHSTRPATPTVP.

Belongs to the universal ribosomal protein uS15 family. In terms of assembly, part of the 30S ribosomal subunit.

This is Small ribosomal subunit protein uS15 from Hyperthermus butylicus (strain DSM 5456 / JCM 9403 / PLM1-5).